Consider the following 174-residue polypeptide: Putative NADH dehydrogenase/NAD(P)H nitroreductase AF_2267 (174 aa).

107–112 (AARCLG) contacts NAD(+).

The protein belongs to the nitroreductase family. It depends on FMN as a cofactor.

The polypeptide is Putative NADH dehydrogenase/NAD(P)H nitroreductase AF_2267 (Archaeoglobus fulgidus (strain ATCC 49558 / DSM 4304 / JCM 9628 / NBRC 100126 / VC-16)).